We begin with the raw amino-acid sequence, 519 residues long: Na(+)/H(+) exchange regulatory cofactor NHE-RF3 (519 aa).

Residues 9–90 (ECKLSKQEGQ…SVTLLVLDGD (82 aa)) form the PDZ 1 domain. Residues serine 108, serine 148, serine 192, serine 250, serine 334, and serine 348 each carry the phosphoserine modification. PDZ domains are found at residues 134–215 (RLCY…VDKE) and 243–323 (IVEM…VDKE). Positions 347 to 374 (GSVKEAPAPTPTSLEVSSPPDTTEEVDH) are disordered. Residues 357-367 (PTSLEVSSPPD) are compositionally biased toward polar residues. A PDZ 4 domain is found at 378–458 (LCRLAKGENG…NVTLLVCGKK (81 aa)). Threonine 451 carries the phosphothreonine modification. Residues 479–519 (DTPPDSKEGIVVESNHDSHMAKERAHSTASHSSSNSEDTEM) are disordered. Residues 482–504 (PDSKEGIVVESNHDSHMAKERAH) show a composition bias toward basic and acidic residues. Phosphoserine is present on residues serine 492, serine 508, serine 510, serine 511, serine 512, and serine 514. The span at 505–519 (STASHSSSNSEDTEM) shows a compositional bias: low complexity.

Belongs to the NHER family. In terms of assembly, interacts with PDZK1IP1 and ABCC2. Interacts (via PDZ domains 1 and 3) with SCARB1 (C-terminal domain). Forms a heterodimeric complex with NHERF1. Interacts with AKAP2, BCR, CFTR, SLC22A12, SLC22A4, SLC22A5, NHERF2 and SLC17A1. Component of a complex, composed of PDZK1, SYNGAP1, KLHL17 and NMDA receptors. Interacts (via PDZ1 domain) directly with KLHL17; the interaction is important for integrity of actin cytoskeleton structures in neurons. Interacts (via the first PDZ domain) with PTGIR (via non-isoprenylated C-terminus). Interacts (via C-terminal PDZ domain) with SLC26A6 (via C-terminal domain). Interacts (via C-terminal PDZ domain) with SLC9A3 (via C-terminal domain). Interacts (via PDZ domains 1 and 3) with SLC5A8 (via PDZ-binding motif); interaction increases nicotinate transport activity of SLC5A8. As to expression, expression is limited to epithelial cells. Expressed in the kidney (brush border of proximal tubule), pancreas, liver, and small intestine. Expressed at a lower level in the adrenal cortex, testis and stomach. Overexpressed in breast, renal and lung carcinomas.

It is found in the membrane. It localises to the cell membrane. A scaffold protein that connects plasma membrane proteins and regulatory components, regulating their surface expression in epithelial cells apical domains. May be involved in the coordination of a diverse range of regulatory processes for ion transport and second messenger cascades. In complex with NHERF1, may cluster proteins that are functionally dependent in a mutual fashion and modulate the trafficking and the activity of the associated membrane proteins. May play a role in the cellular mechanisms associated with multidrug resistance through its interaction with ABCC2 and PDZK1IP1. May potentiate the CFTR chloride channel activity. Required for normal cell-surface expression of SCARB1. Plays a role in maintaining normal plasma cholesterol levels via its effects on SCARB1. Plays a role in the normal localization and function of the chloride-anion exchanger SLC26A6 to the plasma membrane in the brush border of the proximal tubule of the kidney. May be involved in the regulation of proximal tubular Na(+)-dependent inorganic phosphate cotransport therefore playing an important role in tubule function. The polypeptide is Na(+)/H(+) exchange regulatory cofactor NHE-RF3 (PDZK1) (Homo sapiens (Human)).